The following is a 347-amino-acid chain: DNA damage tolerance protein RHC31 (347 aa).

Ser9 is modified (phosphoserine). Residue Lys35 forms a Glycyl lysine isopeptide (Lys-Gly) (interchain with G-Cter in SUMO) linkage.

In terms of biological role, could be involved in a ubiquitin-related process important for DNA damage tolerance. The sequence is that of DNA damage tolerance protein RHC31 (AOS1) from Saccharomyces cerevisiae (strain ATCC 204508 / S288c) (Baker's yeast).